The chain runs to 201 residues: Recombination protein RecR (201 aa).

Residues 60–75 (CSRCGNVDTVDPCTVC) form a C4-type zinc finger. Positions 83-178 (SIIIVVEDVS…KITRLAHGVP (96 aa)) constitute a Toprim domain.

It belongs to the RecR family.

May play a role in DNA repair. It seems to be involved in an RecBC-independent recombinational process of DNA repair. It may act with RecF and RecO. This chain is Recombination protein RecR, found in Rhizobium leguminosarum bv. trifolii (strain WSM2304).